The primary structure comprises 265 residues: 3-methyl-2-oxobutanoate hydroxymethyltransferase (265 aa).

Positions 44 and 83 each coordinate Mg(2+). 3-methyl-2-oxobutanoate is bound by residues 44 to 45 (DS), Asp-83, and Lys-113. Residue Glu-115 participates in Mg(2+) binding. Residue Glu-183 is the Proton acceptor of the active site.

Belongs to the PanB family. In terms of assembly, homodecamer; pentamer of dimers. Mg(2+) is required as a cofactor.

It localises to the cytoplasm. The catalysed reaction is 3-methyl-2-oxobutanoate + (6R)-5,10-methylene-5,6,7,8-tetrahydrofolate + H2O = 2-dehydropantoate + (6S)-5,6,7,8-tetrahydrofolate. The protein operates within cofactor biosynthesis; (R)-pantothenate biosynthesis; (R)-pantoate from 3-methyl-2-oxobutanoate: step 1/2. Functionally, catalyzes the reversible reaction in which hydroxymethyl group from 5,10-methylenetetrahydrofolate is transferred onto alpha-ketoisovalerate to form ketopantoate. This is 3-methyl-2-oxobutanoate hydroxymethyltransferase from Leptospira interrogans serogroup Icterohaemorrhagiae serovar copenhageni (strain Fiocruz L1-130).